We begin with the raw amino-acid sequence, 217 residues long: Uracil-DNA glycosylase (217 aa).

Catalysis depends on Asp62, which acts as the Proton acceptor.

Belongs to the uracil-DNA glycosylase (UDG) superfamily. UNG family.

Its subcellular location is the cytoplasm. The catalysed reaction is Hydrolyzes single-stranded DNA or mismatched double-stranded DNA and polynucleotides, releasing free uracil.. Its function is as follows. Excises uracil residues from the DNA which can arise as a result of misincorporation of dUMP residues by DNA polymerase or due to deamination of cytosine. The chain is Uracil-DNA glycosylase from Streptococcus pyogenes serotype M6 (strain ATCC BAA-946 / MGAS10394).